A 452-amino-acid polypeptide reads, in one-letter code: UDP-glycosyltransferase 76D1 (452 aa).

UDP-alpha-D-glucose contacts are provided by residues Ser-269, 329–331, 346–354, and 368–371; these read APQ, HGGWNSCLE, and SGDQ.

It belongs to the UDP-glycosyltransferase family.

Functionally, possesses low quercetin 7-O-glucosyltransferase activity in vitro. This is UDP-glycosyltransferase 76D1 (UGT76D1) from Arabidopsis thaliana (Mouse-ear cress).